The primary structure comprises 89 residues: Tuberculin-active protein (89 aa).

Residues cysteine 27 and cysteine 59 are joined by a disulfide bond. The interval 61–89 (DGGSESEGKNGSQMRLIADVGPESATVAK) is disordered.

In terms of biological role, tuberculin is the soluble, proteinaceous cell substance of the bacterium, to which infected animals become hypersensitive and react characteristically to dermal injections. This chain is Tuberculin-active protein, found in Mycobacterium tuberculosis.